A 208-amino-acid polypeptide reads, in one-letter code: Small ribosomal subunit protein eS8 (208 aa).

The segment at 1-37 is disordered; it reads MGISRDNWHKRRKTGGKRKPYHKKRKYEPGRPAANTK. Positions 8-26 are enriched in basic residues; sequence WHKRRKTGGKRKPYHKKRK.

It belongs to the eukaryotic ribosomal protein eS8 family. In terms of assembly, component of the small ribosomal subunit. Identified in a IGF2BP1-dependent mRNP granule complex containing untranslated mRNAs. Part of the small subunit (SSU) processome, composed of more than 70 proteins and the RNA chaperone small nucleolar RNA (snoRNA) U3.

The protein localises to the cytoplasm. The protein resides in the membrane. It localises to the nucleus. Its subcellular location is the nucleolus. In terms of biological role, component of the small ribosomal subunit. The ribosome is a large ribonucleoprotein complex responsible for the synthesis of proteins in the cell. Part of the small subunit (SSU) processome, first precursor of the small eukaryotic ribosomal subunit. During the assembly of the SSU processome in the nucleolus, many ribosome biogenesis factors, an RNA chaperone and ribosomal proteins associate with the nascent pre-rRNA and work in concert to generate RNA folding, modifications, rearrangements and cleavage as well as targeted degradation of pre-ribosomal RNA by the RNA exosome. The polypeptide is Small ribosomal subunit protein eS8 (rps8) (Xenopus laevis (African clawed frog)).